The following is a 130-amino-acid chain: MTTQSLETLVETLSNLTVLELAALKKLLEDKWDVTAAAPMMAVAAGAAVGGDAAPAESTEFAVILEDVPADKKIGVLKVVREVTGLALKEAKEMTEGLPKTVKEKTSKSDAEDTVKKLQDAGAKASFKGL.

A disordered region spans residues 94-114 (MTEGLPKTVKEKTSKSDAEDT).

The protein belongs to the bacterial ribosomal protein bL12 family. Homodimer. Part of the ribosomal stalk of the 50S ribosomal subunit. Forms a multimeric L10(L12)X complex, where L10 forms an elongated spine to which 2 to 4 L12 dimers bind in a sequential fashion. Binds GTP-bound translation factors.

In terms of biological role, forms part of the ribosomal stalk which helps the ribosome interact with GTP-bound translation factors. Is thus essential for accurate translation. The protein is Large ribosomal subunit protein bL12 of Chlamydia caviae (strain ATCC VR-813 / DSM 19441 / 03DC25 / GPIC) (Chlamydophila caviae).